The chain runs to 227 residues: LysM and putative peptidoglycan-binding domain-containing protein 1 (227 aa).

A compositionally biased stretch (pro residues) spans 1–11 (MASPSRQPPPG). The segment at 1 to 22 (MASPSRQPPPGGSGLLQGSRAR) is disordered. A phosphoserine mark is found at S23 and S33. Residues 40–84 (LEHQLEPGDTLAGLALKYGVTMEQIKRANRLYTNDSIFLKKTLYI) enclose the LysM domain. The interval 97–150 (LDSEEEKDGEEKVHPSNSEVWPHSTERKKQETGAGRANGEVLPTPGQETPTPIH) is disordered. Phosphoserine occurs at positions 99, 166, 194, and 212.

This chain is LysM and putative peptidoglycan-binding domain-containing protein 1 (LYSMD1), found in Homo sapiens (Human).